We begin with the raw amino-acid sequence, 484 residues long: Glycogen synthase (484 aa).

Residue Lys-15 participates in ADP-alpha-D-glucose binding.

Belongs to the glycosyltransferase 1 family. Bacterial/plant glycogen synthase subfamily.

The enzyme catalyses [(1-&gt;4)-alpha-D-glucosyl](n) + ADP-alpha-D-glucose = [(1-&gt;4)-alpha-D-glucosyl](n+1) + ADP + H(+). It participates in glycan biosynthesis; glycogen biosynthesis. Its function is as follows. Synthesizes alpha-1,4-glucan chains using ADP-glucose. The chain is Glycogen synthase from Geotalea uraniireducens (strain Rf4) (Geobacter uraniireducens).